We begin with the raw amino-acid sequence, 238 residues long: C-reactive protein (238 aa).

The signal sequence occupies residues 1–16; the sequence is MERFALWFIFLAGSLA. Q17 is subject to Pyrrolidone carboxylic acid. The Pentraxin (PTX) domain occupies 21–223; the sequence is VGNVFLFPKP…QATTQPKRQC (203 aa). A disulfide bond links C52 and C113. Residues D76, N77, E154, Q155, D156, and Q166 each coordinate Ca(2+).

It belongs to the pentraxin family. As to quaternary structure, homodimer; disulfide-linked. It is not known if it assembles into a pentraxin (or pentaxin) structure. Pentaxins have a discoid arrangement of 5 non-covalently bound subunits. Ca(2+) is required as a cofactor. Post-translationally, cys-89 or Cys-223 or Cys-236 could be involved in interchain disulfide linkage.

It is found in the secreted. In terms of biological role, displays several functions associated with host defense: it promotes agglutination, bacterial capsular swelling, phagocytosis, and complement fixation through its calcium-dependent binding to phosphorylcholine. This Xenopus laevis (African clawed frog) protein is C-reactive protein (crp).